Consider the following 284-residue polypeptide: Fructosamine kinase FrlD (284 aa).

The protein belongs to the carbohydrate kinase PfkB family.

In terms of biological role, catalyzes the phosphorylation of a range of fructosamines to fructosamine 6-phosphates. The protein is Fructosamine kinase FrlD (frlD) of Bacillus subtilis (strain 168).